A 632-amino-acid polypeptide reads, in one-letter code: tRNA uridine 5-carboxymethylaminomethyl modification enzyme MnmG (632 aa).

FAD contacts are provided by residues 13-18, Val125, and Ser180; that span reads GGGHAG. 273-287 is a binding site for NAD(+); it reads GPRYCPSIEDKINRF. Residue Gln370 coordinates FAD.

Belongs to the MnmG family. Homodimer. Heterotetramer of two MnmE and two MnmG subunits. FAD serves as cofactor.

The protein localises to the cytoplasm. In terms of biological role, NAD-binding protein involved in the addition of a carboxymethylaminomethyl (cmnm) group at the wobble position (U34) of certain tRNAs, forming tRNA-cmnm(5)s(2)U34. The sequence is that of tRNA uridine 5-carboxymethylaminomethyl modification enzyme MnmG from Shewanella sediminis (strain HAW-EB3).